A 622-amino-acid chain; its full sequence is Probable potassium transport system protein Kup 1 (622 aa).

The next 12 helical transmembrane spans lie at 11-31 (LTLGAIGVVYGDIGTSVLYAV), 50-70 (ILSIFFWTLTIIVSLKYVTLV), 101-121 (VLLLVGIFGTCLFYGDGVITP), 137-157 (PAFNKFVIPLTLLVLFGLFWV), 168-188 (FFGPITVVWFACIAVLGVAQI), 215-235 (FIILGAVVLCVTGAEALYADL), 247-267 (WFAVVMPALTLNYFGQGALLL), 285-305 (ALLPLVGLATLATVIASQALI), 337-357 (IYLPFVNWGLFVTIVLAVMIF), 366-386 (AYGIAVCTDMLITTILTFFVI), 393-413 (PLWLCVAATSFFFVVDFAFWA), and 419-439 (LFDGGWFPLLIGGAIFILMIT).

This sequence belongs to the HAK/KUP transporter (TC 2.A.72) family.

The protein resides in the cell inner membrane. It catalyses the reaction K(+)(in) + H(+)(in) = K(+)(out) + H(+)(out). Its function is as follows. Transport of potassium into the cell. Likely operates as a K(+):H(+) symporter. The sequence is that of Probable potassium transport system protein Kup 1 from Albidiferax ferrireducens (strain ATCC BAA-621 / DSM 15236 / T118) (Rhodoferax ferrireducens).